Here is a 344-residue protein sequence, read N- to C-terminus: D-arabinose dehydrogenase [NAD(P)+] heavy chain (344 aa).

Tyrosine 71 acts as the Proton donor in catalysis. A substrate-binding site is contributed by histidine 131. Threonine 151 is subject to Phosphothreonine. 241-295 (SPLGSHGAPNLKIPLVKKLAEKYNVTGNDLLISYHIRQGTIVIPRSLNPVRISSS) is an NADP(+) binding site.

This sequence belongs to the aldo/keto reductase family. Heterodimer of a heavy chain and a light chain.

The protein localises to the cytoplasm. It carries out the reaction D-arabinose + NADP(+) = D-arabinono-1,4-lactone + NADPH + H(+). It catalyses the reaction D-arabinose + NAD(+) = D-arabinono-1,4-lactone + NADH + H(+). In terms of biological role, catalyzes the oxidation of D-arabinose, L-xylose, L-fucose and L-galactose in the presence of NADP(+). The sequence is that of D-arabinose dehydrogenase [NAD(P)+] heavy chain (ARA1) from Saccharomyces cerevisiae (strain ATCC 204508 / S288c) (Baker's yeast).